The primary structure comprises 477 residues: Methylenetetrahydrofolate--tRNA-(uracil-5-)-methyltransferase TrmFO (477 aa).

15–20 (GAGLAG) contributes to the FAD binding site.

It belongs to the MnmG family. TrmFO subfamily. Requires FAD as cofactor.

The protein localises to the cytoplasm. The catalysed reaction is uridine(54) in tRNA + (6R)-5,10-methylene-5,6,7,8-tetrahydrofolate + NADH + H(+) = 5-methyluridine(54) in tRNA + (6S)-5,6,7,8-tetrahydrofolate + NAD(+). The enzyme catalyses uridine(54) in tRNA + (6R)-5,10-methylene-5,6,7,8-tetrahydrofolate + NADPH + H(+) = 5-methyluridine(54) in tRNA + (6S)-5,6,7,8-tetrahydrofolate + NADP(+). Functionally, catalyzes the folate-dependent formation of 5-methyl-uridine at position 54 (M-5-U54) in all tRNAs. This Nitrobacter winogradskyi (strain ATCC 25391 / DSM 10237 / CIP 104748 / NCIMB 11846 / Nb-255) protein is Methylenetetrahydrofolate--tRNA-(uracil-5-)-methyltransferase TrmFO.